Reading from the N-terminus, the 536-residue chain is 2-isopropylmalate synthase (536 aa).

In terms of domain architecture, Pyruvate carboxyltransferase spans 8–269 (IIIFDTTLRD…YYNPFLGRPV (262 aa)). The Mn(2+) site is built by D17, H208, H210, and N244. A regulatory domain region spans residues 408 to 536 (RLELVQVSCG…KEKAAVTSAS (129 aa)).

This sequence belongs to the alpha-IPM synthase/homocitrate synthase family. LeuA type 1 subfamily. In terms of assembly, homodimer. The cofactor is Mn(2+).

It localises to the cytoplasm. It catalyses the reaction 3-methyl-2-oxobutanoate + acetyl-CoA + H2O = (2S)-2-isopropylmalate + CoA + H(+). It functions in the pathway amino-acid biosynthesis; L-leucine biosynthesis; L-leucine from 3-methyl-2-oxobutanoate: step 1/4. Functionally, catalyzes the condensation of the acetyl group of acetyl-CoA with 3-methyl-2-oxobutanoate (2-ketoisovalerate) to form 3-carboxy-3-hydroxy-4-methylpentanoate (2-isopropylmalate). The chain is 2-isopropylmalate synthase from Gloeothece citriformis (strain PCC 7424) (Cyanothece sp. (strain PCC 7424)).